A 333-amino-acid chain; its full sequence is Sphingomyelinase C (333 aa).

The signal sequence occupies residues 1-27; the sequence is MKGKLLKGVLSFGIGLGVLYGGSSVQA. Cysteine 150 and cysteine 186 form a disulfide bridge.

Belongs to the neutral sphingomyelinase family. The cofactor is Mg(2+).

It localises to the secreted. It carries out the reaction a sphingomyelin + H2O = phosphocholine + an N-acylsphing-4-enine + H(+). Its activity is regulated as follows. Activated by cobalt and manganese ions. Functionally, required, with sphingomyelinase, to effect target cell lysis (hemolysis). The sequence is that of Sphingomyelinase C (sph) from Bacillus cereus.